We begin with the raw amino-acid sequence, 676 residues long: tRNA 5-methylaminomethyl-2-thiouridine biosynthesis bifunctional protein MnmC (676 aa).

Residues Met1–Asn241 form a tRNA (mnm(5)s(2)U34)-methyltransferase region. The tract at residues Ile268 to Lys676 is FAD-dependent cmnm(5)s(2)U34 oxidoreductase.

The protein in the N-terminal section; belongs to the methyltransferase superfamily. tRNA (mnm(5)s(2)U34)-methyltransferase family. In the C-terminal section; belongs to the DAO family. Requires FAD as cofactor.

Its subcellular location is the cytoplasm. The catalysed reaction is 5-aminomethyl-2-thiouridine(34) in tRNA + S-adenosyl-L-methionine = 5-methylaminomethyl-2-thiouridine(34) in tRNA + S-adenosyl-L-homocysteine + H(+). Functionally, catalyzes the last two steps in the biosynthesis of 5-methylaminomethyl-2-thiouridine (mnm(5)s(2)U) at the wobble position (U34) in tRNA. Catalyzes the FAD-dependent demodification of cmnm(5)s(2)U34 to nm(5)s(2)U34, followed by the transfer of a methyl group from S-adenosyl-L-methionine to nm(5)s(2)U34, to form mnm(5)s(2)U34. The chain is tRNA 5-methylaminomethyl-2-thiouridine biosynthesis bifunctional protein MnmC from Histophilus somni (strain 129Pt) (Haemophilus somnus).